The sequence spans 152 residues: Superoxide dismutase [Cu-Zn] (152 aa).

Cu cation is bound by residues histidine 45, histidine 47, and histidine 62. A disulfide bond links cysteine 56 and cysteine 145. Residues histidine 62, histidine 70, histidine 79, and aspartate 82 each contribute to the Zn(2+) site. Histidine 119 contacts Cu cation.

This sequence belongs to the Cu-Zn superoxide dismutase family. As to quaternary structure, homodimer. Requires Cu cation as cofactor. The cofactor is Zn(2+).

Its subcellular location is the cytoplasm. It carries out the reaction 2 superoxide + 2 H(+) = H2O2 + O2. Functionally, destroys radicals which are normally produced within the cells and which are toxic to biological systems. This Ipomoea batatas (Sweet potato) protein is Superoxide dismutase [Cu-Zn] (SODCC).